A 254-amino-acid polypeptide reads, in one-letter code: Imidazole glycerol phosphate synthase subunit HisF (254 aa).

Catalysis depends on residues Asp-13 and Asp-132.

It belongs to the HisA/HisF family. As to quaternary structure, heterodimer of HisH and HisF.

It is found in the cytoplasm. It catalyses the reaction 5-[(5-phospho-1-deoxy-D-ribulos-1-ylimino)methylamino]-1-(5-phospho-beta-D-ribosyl)imidazole-4-carboxamide + L-glutamine = D-erythro-1-(imidazol-4-yl)glycerol 3-phosphate + 5-amino-1-(5-phospho-beta-D-ribosyl)imidazole-4-carboxamide + L-glutamate + H(+). It participates in amino-acid biosynthesis; L-histidine biosynthesis; L-histidine from 5-phospho-alpha-D-ribose 1-diphosphate: step 5/9. In terms of biological role, IGPS catalyzes the conversion of PRFAR and glutamine to IGP, AICAR and glutamate. The HisF subunit catalyzes the cyclization activity that produces IGP and AICAR from PRFAR using the ammonia provided by the HisH subunit. The protein is Imidazole glycerol phosphate synthase subunit HisF of Nautilia profundicola (strain ATCC BAA-1463 / DSM 18972 / AmH).